A 94-amino-acid chain; its full sequence is Probable Fe(2+)-trafficking protein (94 aa).

It belongs to the Fe(2+)-trafficking protein family.

Could be a mediator in iron transactions between iron acquisition and iron-requiring processes, such as synthesis and/or repair of Fe-S clusters in biosynthetic enzymes. This is Probable Fe(2+)-trafficking protein from Alcanivorax borkumensis (strain ATCC 700651 / DSM 11573 / NCIMB 13689 / SK2).